A 201-amino-acid polypeptide reads, in one-letter code: Histidinol dehydrogenase (201 aa).

Belongs to the histidinol dehydrogenase family. Homodimer. Zn(2+) is required as a cofactor.

The enzyme catalyses L-histidinol + 2 NAD(+) + H2O = L-histidine + 2 NADH + 3 H(+). It participates in amino-acid biosynthesis; L-histidine biosynthesis; L-histidine from 5-phospho-alpha-D-ribose 1-diphosphate: step 9/9. In terms of biological role, catalyzes the sequential NAD-dependent oxidations of L-histidinol to L-histidinaldehyde and then to L-histidine. This Buchnera aphidicola subsp. Schlechtendalia chinensis protein is Histidinol dehydrogenase (hisD).